The chain runs to 537 residues: Phosphoenolpyruvate carboxykinase (ATP) (537 aa).

Residues Arg61, Tyr195, and Lys201 each contribute to the substrate site. ATP is bound by residues Lys201, His220, and 236–244 (GLSGTGKTT). Mn(2+)-binding residues include Lys201 and His220. Asp257 is a binding site for Mn(2+). Residues Glu285, Arg323, and Thr448 each contribute to the ATP site. Arg323 lines the substrate pocket.

This sequence belongs to the phosphoenolpyruvate carboxykinase (ATP) family. Mn(2+) is required as a cofactor.

It localises to the cytoplasm. It catalyses the reaction oxaloacetate + ATP = phosphoenolpyruvate + ADP + CO2. The protein operates within carbohydrate biosynthesis; gluconeogenesis. Its function is as follows. Involved in the gluconeogenesis. Catalyzes the conversion of oxaloacetate (OAA) to phosphoenolpyruvate (PEP) through direct phosphoryl transfer between the nucleoside triphosphate and OAA. The polypeptide is Phosphoenolpyruvate carboxykinase (ATP) (Rhodopseudomonas palustris (strain TIE-1)).